The sequence spans 429 residues: Septin-8 (429 aa).

Residues 1–16 show a composition bias toward basic and acidic residues; sequence MAATDLERVSNAEPEP. The tract at residues 1 to 23 is disordered; it reads MAATDLERVSNAEPEPRSLSLGG. Position 2 is an N-acetylalanine (alanine 2). Serine 10 carries the post-translational modification Phosphoserine. One can recognise a Septin-type G domain in the interval 41–307; sequence QGFSFNILCV…ELYRRCKLEE (267 aa). A G1 motif region spans residues 51 to 58; it reads GETGIGKS. Residues 51-58, glycine 106, 187-195, glycine 241, and arginine 256 each bind GTP; these read GETGIGKS and KADTISKSE. The segment at 103-106 is G3 motif; that stretch reads DAVG. The G4 motif stretch occupies residues 186–189; the sequence is AKAD. Residues 320–412 adopt a coiled-coil conformation; sequence FSLQETYEAK…AAMEALQSQA (93 aa). Polar residues predominate over residues 409–420; it reads QSQALHATSQQP. Positions 409 to 429 are disordered; that stretch reads QSQALHATSQQPLRKDKDKKN.

Belongs to the TRAFAC class TrmE-Era-EngA-EngB-Septin-like GTPase superfamily. Septin GTPase family. As to quaternary structure, septins polymerize into heterooligomeric protein complexes that form filaments, and can associate with cellular membranes, actin filaments and microtubules. GTPase activity is required for filament formation. Interacts with SEPTIN5. Interacts with CDK14, SEPTIN4 and SEPTIN7. Interacts with VAMP2; the interaction inhibits interaction of VAMP2 with SYP. Interacts with STX1A.

Its subcellular location is the cytoplasm. The protein resides in the cytoskeleton. It is found in the synapse. The protein localises to the cell projection. It localises to the axon. Its subcellular location is the cytoplasmic vesicle. The protein resides in the secretory vesicle. It is found in the synaptic vesicle membrane. The protein localises to the presynapse. Its function is as follows. Filament-forming cytoskeletal GTPase. May play a role in platelet secretion. Seems to participate in the process of SNARE complex formation in synaptic vesicles. The protein is Septin-8 of Mus musculus (Mouse).